A 157-amino-acid chain; its full sequence is SsrA-binding protein (157 aa).

The interval 131–157 (KQLHDKRESVKQRDWQRDKARLMRDKG) is disordered. Residues 132 to 157 (QLHDKRESVKQRDWQRDKARLMRDKG) show a composition bias toward basic and acidic residues.

The protein belongs to the SmpB family.

It localises to the cytoplasm. Required for rescue of stalled ribosomes mediated by trans-translation. Binds to transfer-messenger RNA (tmRNA), required for stable association of tmRNA with ribosomes. tmRNA and SmpB together mimic tRNA shape, replacing the anticodon stem-loop with SmpB. tmRNA is encoded by the ssrA gene; the 2 termini fold to resemble tRNA(Ala) and it encodes a 'tag peptide', a short internal open reading frame. During trans-translation Ala-aminoacylated tmRNA acts like a tRNA, entering the A-site of stalled ribosomes, displacing the stalled mRNA. The ribosome then switches to translate the ORF on the tmRNA; the nascent peptide is terminated with the 'tag peptide' encoded by the tmRNA and targeted for degradation. The ribosome is freed to recommence translation, which seems to be the essential function of trans-translation. This chain is SsrA-binding protein, found in Methylorubrum populi (strain ATCC BAA-705 / NCIMB 13946 / BJ001) (Methylobacterium populi).